Reading from the N-terminus, the 1045-residue chain is 3-hydroxy-3-methylglutaryl-coenzyme A reductase 2 (1045 aa).

The Cytoplasmic portion of the chain corresponds to 1 to 24 (MSLPLKTIVHLVKPFACTARFSAR). Residues 25–45 (YPIHVIVVAVLLSAAAYLSVT) traverse the membrane as a helical segment. Residues 46-186 (QSYLNEWKLD…FSNKTSEFDQ (141 aa)) are Lumenal-facing. Residues Asn-115, Asn-150, Asn-158, and Asn-179 are each glycosylated (N-linked (GlcNAc...) asparagine). A helical transmembrane segment spans residues 187–207 (FDLFIILAAYLTLFYTLCCLF). In terms of domain architecture, SSD spans 188 to 356 (DLFIILAAYL…ATFYSAILSM (169 aa)). At 208-216 (NDMRKIGSK) the chain is on the cytoplasmic side. A helical membrane pass occupies residues 217-237 (FWLSFSALSNSACALYLSLYT). The Lumenal segment spans residues 238–243 (THSLLK). The helical transmembrane segment at 244-264 (KPASLLSLVIGLPFIVVIIGF) threads the bilayer. At 265 to 301 (KHKVRLAAFSLQKFHRISIDKKITVSNIIYEAMFQEG) the chain is on the cytoplasmic side. A helical membrane pass occupies residues 302–322 (AYLIRDYLFYISSFIGCAIYA). The Lumenal segment spans residues 323–324 (RH). The chain crosses the membrane as a helical span at residues 325–345 (LPGLVNFCILSTFMLVFDLLL). The Cytoplasmic portion of the chain corresponds to 346 to 402 (SATFYSAILSMKLEINIIHRSTVIRQTLEEDGVVPTTADIIYKDETASEPHFLRSNV). Residues 403–423 (AIILGKASVIGLLLLINLYVF) traverse the membrane as a helical segment. The Lumenal portion of the chain corresponds to 424–497 (TDKLNATILN…DSVSNAIRDQ (74 aa)). N-linked (GlcNAc...) asparagine glycosylation is found at Asn-428 and Asn-455. A helical transmembrane segment spans residues 498 to 518 (FISKLLFFAFAVSISINVYLL). The Cytoplasmic portion of the chain corresponds to 519–1045 (NAAKIHTGYM…GPPCKTSALL (527 aa)). A Phosphothreonine modification is found at Thr-565. Glu-710 acts as the Charge relay system in catalysis. 716 to 722 (SAMRGCK) serves as a coordination point for CoA. NADP(+) contacts are provided by residues 777–779 (SRF) and 804–812 (DAMGMNMIS). Catalysis depends on Lys-844, which acts as the Charge relay system. Position 873 to 875 (873 to 875 (VLK)) interacts with CoA. Asp-920 (charge relay system) is an active-site residue. 1015–1016 (SH) contributes to the CoA binding site. The Proton donor role is filled by His-1016. A disordered region spans residues 1018–1045 (THNRKTNKANELPQPSNKGPPCKTSALL). 1020–1021 (NR) is an NADP(+) binding site.

Belongs to the HMG-CoA reductase family.

The protein resides in the endoplasmic reticulum membrane. The protein localises to the nucleus envelope. The enzyme catalyses (R)-mevalonate + 2 NADP(+) + CoA = (3S)-3-hydroxy-3-methylglutaryl-CoA + 2 NADPH + 2 H(+). It participates in metabolic intermediate biosynthesis; (R)-mevalonate biosynthesis; (R)-mevalonate from acetyl-CoA: step 3/3. Its function is as follows. HMG-CoA reductase; part of the first module of ergosterol biosynthesis pathway constitutes by the early steps of the pathway, conserved across all eukaryotes, and which results in the formation of mevalonate from acetyl-coenzyme A (acetyl-CoA). HMG1 and HMG2 catalyze the reduction of hydroxymethylglutaryl-CoA (HMG-CoA) to mevalonate that is the rate-limiting step within the first mosule. The first module starts with the action of the cytosolic acetyl-CoA acetyltransferase ERG10 that catalyzes the formation of acetoacetyl-CoA. The hydroxymethylglutaryl-CoA synthase ERG13 then condenses acetyl-CoA with acetoacetyl-CoA to form HMG-CoA. The rate-limiting step of the early module is the reduction to mevalonate by the 3-hydroxy-3-methylglutaryl-coenzyme A (HMG-CoA) reductases HMG1 and HMG2 which are derived from a single ancestral HMGR gene by gene duplication. This chain is 3-hydroxy-3-methylglutaryl-coenzyme A reductase 2, found in Saccharomyces cerevisiae (strain ATCC 204508 / S288c) (Baker's yeast).